A 215-amino-acid polypeptide reads, in one-letter code: UPF0502 protein Gbem_0102 (215 aa).

It belongs to the UPF0502 family.

The polypeptide is UPF0502 protein Gbem_0102 (Citrifermentans bemidjiense (strain ATCC BAA-1014 / DSM 16622 / JCM 12645 / Bem) (Geobacter bemidjiensis)).